Consider the following 155-residue polypeptide: Regulatory protein RecX (155 aa).

This sequence belongs to the RecX family.

The protein localises to the cytoplasm. Its function is as follows. Modulates RecA activity. This is Regulatory protein RecX from Pseudomonas fluorescens (strain SBW25).